Here is a 351-residue protein sequence, read N- to C-terminus: Holliday junction branch migration complex subunit RuvB (351 aa).

Positions 1–22 are disordered; it reads MSDPKANRMVSPERRSDDVGDT. Positions 2–185 are large ATPase domain (RuvB-L); the sequence is SDPKANRMVS…FGIPVRLNFY (184 aa). ATP is bound by residues Leu-24, Arg-25, Gly-66, Lys-69, Thr-70, Thr-71, 132–134, Arg-175, Tyr-185, and Arg-222; that span reads EDF. Residue Thr-70 coordinates Mg(2+). Residues 186–256 form a small ATPAse domain (RuvB-S) region; sequence TIEELESIVS…IADHALSALE (71 aa). Positions 259–351 are head domain (RuvB-H); the sequence is AAGLDAMDRR…GLFGTDESDD (93 aa). 3 residues coordinate DNA: Arg-295, Arg-314, and Arg-319.

Belongs to the RuvB family. In terms of assembly, homohexamer. Forms an RuvA(8)-RuvB(12)-Holliday junction (HJ) complex. HJ DNA is sandwiched between 2 RuvA tetramers; dsDNA enters through RuvA and exits via RuvB. An RuvB hexamer assembles on each DNA strand where it exits the tetramer. Each RuvB hexamer is contacted by two RuvA subunits (via domain III) on 2 adjacent RuvB subunits; this complex drives branch migration. In the full resolvosome a probable DNA-RuvA(4)-RuvB(12)-RuvC(2) complex forms which resolves the HJ.

It is found in the cytoplasm. It carries out the reaction ATP + H2O = ADP + phosphate + H(+). Functionally, the RuvA-RuvB-RuvC complex processes Holliday junction (HJ) DNA during genetic recombination and DNA repair, while the RuvA-RuvB complex plays an important role in the rescue of blocked DNA replication forks via replication fork reversal (RFR). RuvA specifically binds to HJ cruciform DNA, conferring on it an open structure. The RuvB hexamer acts as an ATP-dependent pump, pulling dsDNA into and through the RuvAB complex. RuvB forms 2 homohexamers on either side of HJ DNA bound by 1 or 2 RuvA tetramers; 4 subunits per hexamer contact DNA at a time. Coordinated motions by a converter formed by DNA-disengaged RuvB subunits stimulates ATP hydrolysis and nucleotide exchange. Immobilization of the converter enables RuvB to convert the ATP-contained energy into a lever motion, pulling 2 nucleotides of DNA out of the RuvA tetramer per ATP hydrolyzed, thus driving DNA branch migration. The RuvB motors rotate together with the DNA substrate, which together with the progressing nucleotide cycle form the mechanistic basis for DNA recombination by continuous HJ branch migration. Branch migration allows RuvC to scan DNA until it finds its consensus sequence, where it cleaves and resolves cruciform DNA. This Bradyrhizobium diazoefficiens (strain JCM 10833 / BCRC 13528 / IAM 13628 / NBRC 14792 / USDA 110) protein is Holliday junction branch migration complex subunit RuvB.